The chain runs to 249 residues: Anti-H(O) lectin 2 (249 aa).

An N-linked (GlcNAc...) asparagine glycan is attached at asparagine 118. Positions 130 and 132 each coordinate Mn(2+). Ca(2+) contacts are provided by aspartate 132, tyrosine 134, asparagine 140, and aspartate 145. Residues aspartate 145 and histidine 148 each contribute to the Mn(2+) site. A glycan (N-linked (GlcNAc...) asparagine) is linked at asparagine 245.

Belongs to the leguminous lectin family.

Di-N-acetylchitobiose specific lectin. The sequence is that of Anti-H(O) lectin 2 from Ulex europaeus (Furze).